The sequence spans 1030 residues: Eukaryotic translation initiation factor 3 subunit A (1030 aa).

A coiled-coil region spans residues 94-126; sequence FKEIITPIEQKVDELKEKIEKENQENPLVEQNE. In terms of domain architecture, PCI spans 308–483; it reads SQLYSSVLLV…GVIRFGHYDF (176 aa). 2 coiled-coil regions span residues 527–620 and 720–772; these read INSL…KAKI and IQQE…RKNA. 5 stretches are compositionally biased toward basic and acidic residues: residues 576–591, 743–771, 800–931, 939–985, and 1003–1019; these read RDQQRLKEDMERREKE, EKARKEEQERERLEQEHLEQERLEEERKN, RGGD…RRDG, GRRD…RRDG, and DSWRSDNKKEENKKDAD. Disordered regions lie at residues 576–603 and 737–1030; these read RDQQRLKEDMERREKEQAEEESQQNQLD and RIAA…KKRY.

The protein belongs to the eIF-3 subunit A family. As to quaternary structure, component of the eukaryotic translation initiation factor 3 (eIF-3) complex.

The protein resides in the cytoplasm. RNA-binding component of the eukaryotic translation initiation factor 3 (eIF-3) complex, which is involved in protein synthesis of a specialized repertoire of mRNAs and, together with other initiation factors, stimulates binding of mRNA and methionyl-tRNAi to the 40S ribosome. The eIF-3 complex specifically targets and initiates translation of a subset of mRNAs involved in cell proliferation. The sequence is that of Eukaryotic translation initiation factor 3 subunit A (eif3A) from Dictyostelium discoideum (Social amoeba).